The following is a 250-amino-acid chain: NADH-quinone oxidoreductase subunit C (250 aa).

Residues 193 to 250 (GMTPPLPGDEKADMPPIDDPMVTEGPEDTGAGARANAKAAEGTPADPPAMDDEEEDDA) are disordered. Low complexity predominate over residues 222-236 (GAGARANAKAAEGTP). Over residues 241-250 (AMDDEEEDDA) the composition is skewed to acidic residues.

The protein belongs to the complex I 30 kDa subunit family. As to quaternary structure, NDH-1 is composed of 14 different subunits. Subunits NuoB, C, D, E, F, and G constitute the peripheral sector of the complex.

It localises to the cell inner membrane. It catalyses the reaction a quinone + NADH + 5 H(+)(in) = a quinol + NAD(+) + 4 H(+)(out). In terms of biological role, NDH-1 shuttles electrons from NADH, via FMN and iron-sulfur (Fe-S) centers, to quinones in the respiratory chain. The immediate electron acceptor for the enzyme in this species is believed to be ubiquinone. Couples the redox reaction to proton translocation (for every two electrons transferred, four hydrogen ions are translocated across the cytoplasmic membrane), and thus conserves the redox energy in a proton gradient. The sequence is that of NADH-quinone oxidoreductase subunit C from Erythrobacter litoralis (strain HTCC2594).